Consider the following 489-residue polypeptide: DHAGIATQFRVEKKIYDEKKLHRGEYSREYFLEEAHKWVESKSGTILSQLRDMGSSLAWKDTYYTLDEKLSESVIAAFIKLFDEGLIYRSERLVNWDCALKTAISDAEVEYITLTKRTKLNVPNHKYPQYPFGVMAHFYYEICDKDGKKTGEKVEIATTRLETMLGDTAVAINPKDARYNHLHGMYVWHPIREVPIPIIQDEILVDMNFGTGVVKVTPGHDPNDYEVYKRHPEIGLISILTPDGAIAPGYGQFSGMMRFDARVEMVKWMKEHGLYKEEKDHEMRLGITQRGHDIVEQVITPQWFVNTTDMAARAIKAVDDGELKIVPDEFVVDWKKWHENIRPWCISRQLMWGLRIPAYRVQIDGKWAEGNGEWVAAASQEEAIAKGAKANNVVPSRVTVEQDPDVLDTWFSSALLPFSGVGWPSNEERLNRYFPNSILETGWDILTFWVSRMVMMSLTLTNKVPFHTILLHPLVRDAQGRKMSKSFGN.

A 'KMSKS' region motif is present at residues 482 to 486 (KMSKS). Position 485 (K485) interacts with ATP.

The protein belongs to the class-I aminoacyl-tRNA synthetase family.

The catalysed reaction is tRNA(Val) + L-valine + ATP = L-valyl-tRNA(Val) + AMP + diphosphate. The protein is Valine--tRNA ligase (VALS) of Trichomonas vaginalis.